The primary structure comprises 220 residues: MMQELKILNEKRAEIYWWLSSLFFKELSEQDIARYHSAEVRTFLSGLADEQSLSREVKHLVEALNRLQDRQDAQLELAADFCDLFLKSDRDSALPYASVYTDQGLLNGKPAQQMRELLSAHGVKVEQNLNEPEDHLAIQLDFLAHLAISANQIEHSAQLSLALQAQSDFISQHLLTWLPAFAERCTQFDAFGLYSAAARLALAFIQQDKHCLDELIQETH.

The protein belongs to the TorD/DmsD family. TorD subfamily.

Its subcellular location is the cytoplasm. Functionally, involved in the biogenesis of TorA. Acts on TorA before the insertion of the molybdenum cofactor and, as a result, probably favors a conformation of the apoenzyme that is competent for acquiring the cofactor. The protein is Chaperone protein TorD of Vibrio cholerae serotype O1 (strain ATCC 39541 / Classical Ogawa 395 / O395).